The following is a 355-amino-acid chain: uncharacterized protein (355 aa).

A J domain is found at 9 to 75 (DYYDILNISV…KLREKYDKLG (67 aa)).

It belongs to the DnaJ family.

The protein localises to the cytoplasm. This is an uncharacterized protein from Schizosaccharomyces pombe (strain 972 / ATCC 24843) (Fission yeast).